The sequence spans 355 residues: Uroporphyrinogen decarboxylase (355 aa).

Substrate is bound by residues 27-31 (RQAGR), F46, D78, Y155, S210, and H328.

Belongs to the uroporphyrinogen decarboxylase family. In terms of assembly, homodimer.

It is found in the cytoplasm. It catalyses the reaction uroporphyrinogen III + 4 H(+) = coproporphyrinogen III + 4 CO2. The protein operates within porphyrin-containing compound metabolism; protoporphyrin-IX biosynthesis; coproporphyrinogen-III from 5-aminolevulinate: step 4/4. Its function is as follows. Catalyzes the decarboxylation of four acetate groups of uroporphyrinogen-III to yield coproporphyrinogen-III. This is Uroporphyrinogen decarboxylase from Pseudomonas aeruginosa (strain ATCC 15692 / DSM 22644 / CIP 104116 / JCM 14847 / LMG 12228 / 1C / PRS 101 / PAO1).